A 460-amino-acid chain; its full sequence is Cysteine--tRNA ligase (460 aa).

Residue Cys-28 participates in Zn(2+) binding. The 'HIGH' region motif lies at 30-40 (VTIYDLCHIGH). Zn(2+) contacts are provided by Cys-209, His-234, and Glu-238. A 'KMSKS' region motif is present at residues 266–270 (KMSKS). Lys-269 is an ATP binding site.

It belongs to the class-I aminoacyl-tRNA synthetase family. In terms of assembly, monomer. The cofactor is Zn(2+).

Its subcellular location is the cytoplasm. It catalyses the reaction tRNA(Cys) + L-cysteine + ATP = L-cysteinyl-tRNA(Cys) + AMP + diphosphate. This Vibrio vulnificus (strain YJ016) protein is Cysteine--tRNA ligase.